We begin with the raw amino-acid sequence, 198 residues long: Cytochrome c oxidase assembly protein CtaG (198 aa).

Residues 1-12 (MADTGQSDRKER) are Cytoplasmic-facing. Residues 13–35 (SNGVIVGTCLAFVVGMVGMAYAA) traverse the membrane as a helical; Signal-anchor for type II membrane protein segment. The Periplasmic segment spans residues 36 to 198 (VPLYDMFCRV…QVKSRTENKL (163 aa)).

Belongs to the COX11/CtaG family.

The protein resides in the cell inner membrane. In terms of biological role, exerts its effect at some terminal stage of cytochrome c oxidase synthesis, probably by being involved in the insertion of the copper B into subunit I. This Sinorhizobium medicae (strain WSM419) (Ensifer medicae) protein is Cytochrome c oxidase assembly protein CtaG.